Here is a 474-residue protein sequence, read N- to C-terminus: Probable glycine dehydrogenase (decarboxylating) subunit 2 (474 aa).

K262 bears the N6-(pyridoxal phosphate)lysine mark.

Belongs to the GcvP family. C-terminal subunit subfamily. As to quaternary structure, the glycine cleavage system is composed of four proteins: P, T, L and H. In this organism, the P 'protein' is a heterodimer of two subunits. It depends on pyridoxal 5'-phosphate as a cofactor.

The enzyme catalyses N(6)-[(R)-lipoyl]-L-lysyl-[glycine-cleavage complex H protein] + glycine + H(+) = N(6)-[(R)-S(8)-aminomethyldihydrolipoyl]-L-lysyl-[glycine-cleavage complex H protein] + CO2. Functionally, the glycine cleavage system catalyzes the degradation of glycine. The P protein binds the alpha-amino group of glycine through its pyridoxal phosphate cofactor; CO(2) is released and the remaining methylamine moiety is then transferred to the lipoamide cofactor of the H protein. In Thermotoga maritima (strain ATCC 43589 / DSM 3109 / JCM 10099 / NBRC 100826 / MSB8), this protein is Probable glycine dehydrogenase (decarboxylating) subunit 2.